Here is a 504-residue protein sequence, read N- to C-terminus: Histidine--tRNA ligase (504 aa).

It belongs to the class-II aminoacyl-tRNA synthetase family. In terms of assembly, homodimer.

It is found in the cytoplasm. The catalysed reaction is tRNA(His) + L-histidine + ATP = L-histidyl-tRNA(His) + AMP + diphosphate + H(+). The chain is Histidine--tRNA ligase from Rhizobium rhizogenes (strain K84 / ATCC BAA-868) (Agrobacterium radiobacter).